Here is a 150-residue protein sequence, read N- to C-terminus: Meiotic expression up-regulated protein 15 (150 aa).

This Schizosaccharomyces pombe (strain 972 / ATCC 24843) (Fission yeast) protein is Meiotic expression up-regulated protein 15 (meu15).